Reading from the N-terminus, the 185-residue chain is MSEQALSTFDRAREALDKKTRYVQDFPEKGVLFEDLTPVLGDAESFVAVVDAMAEAAEKLNAEIIGGLDARGFLLGSAVAYKLGLGVLAIRKKGKLPPPVVTQEYELEYGTAALELPSEGIDIAGKNIVLIDDVLATGGTLGAARKLIESCDGHVSGYVLAIEVPGLGGRDNLGDRPVIVVRDPQ.

It belongs to the purine/pyrimidine phosphoribosyltransferase family. In terms of assembly, homodimer.

The protein resides in the cytoplasm. The catalysed reaction is AMP + diphosphate = 5-phospho-alpha-D-ribose 1-diphosphate + adenine. It functions in the pathway purine metabolism; AMP biosynthesis via salvage pathway; AMP from adenine: step 1/1. In terms of biological role, catalyzes a salvage reaction resulting in the formation of AMP, that is energically less costly than de novo synthesis. This is Adenine phosphoribosyltransferase from Corynebacterium glutamicum (strain ATCC 13032 / DSM 20300 / JCM 1318 / BCRC 11384 / CCUG 27702 / LMG 3730 / NBRC 12168 / NCIMB 10025 / NRRL B-2784 / 534).